Consider the following 149-residue polypeptide: 3-dehydroquinate dehydratase (149 aa).

The active-site Proton acceptor is the Tyr-26. Substrate is bound by residues Asn-77, His-83, and Asp-90. The Proton donor role is filled by His-103. Residues 104 to 105 and Arg-114 contribute to the substrate site; that span reads LS.

It belongs to the type-II 3-dehydroquinase family. In terms of assembly, homododecamer.

The catalysed reaction is 3-dehydroquinate = 3-dehydroshikimate + H2O. The protein operates within metabolic intermediate biosynthesis; chorismate biosynthesis; chorismate from D-erythrose 4-phosphate and phosphoenolpyruvate: step 3/7. Catalyzes a trans-dehydration via an enolate intermediate. This is 3-dehydroquinate dehydratase from Aeromonas salmonicida (strain A449).